The sequence spans 159 residues: Phosphopantetheine adenylyltransferase (159 aa).

T10 lines the substrate pocket. Residues 10–11 (TF) and H18 each bind ATP. Residues K42, M74, and R88 each coordinate substrate. ATP contacts are provided by residues 89–91 (GLR), E99, and 124–130 (WSFISSS).

The protein belongs to the bacterial CoaD family. As to quaternary structure, homohexamer. Mg(2+) is required as a cofactor.

The protein resides in the cytoplasm. The enzyme catalyses (R)-4'-phosphopantetheine + ATP + H(+) = 3'-dephospho-CoA + diphosphate. The protein operates within cofactor biosynthesis; coenzyme A biosynthesis; CoA from (R)-pantothenate: step 4/5. In terms of biological role, reversibly transfers an adenylyl group from ATP to 4'-phosphopantetheine, yielding dephospho-CoA (dPCoA) and pyrophosphate. The chain is Phosphopantetheine adenylyltransferase from Yersinia enterocolitica serotype O:8 / biotype 1B (strain NCTC 13174 / 8081).